Reading from the N-terminus, the 82-residue chain is MNPIVSGASVIAAGLAIGLASIGPGIGQGTAAAQAVEGLARQPEAEGKIRGTLLLSLAFMESLTIYGLVVALCLLFANPFAG.

The next 2 membrane-spanning stretches (helical) occupy residues 7–27 (GASV…PGIG) and 57–77 (LAFM…LLFA).

It belongs to the ATPase C chain family. As to quaternary structure, F-type ATPases have 2 components, F(1) - the catalytic core - and F(0) - the membrane proton channel. F(1) has five subunits: alpha(3), beta(3), gamma(1), delta(1), epsilon(1). F(0) has four main subunits: a(1), b(1), b'(1) and c(10-14). The alpha and beta chains form an alternating ring which encloses part of the gamma chain. F(1) is attached to F(0) by a central stalk formed by the gamma and epsilon chains, while a peripheral stalk is formed by the delta, b and b' chains.

The protein resides in the plastid. The protein localises to the chloroplast thylakoid membrane. Its function is as follows. F(1)F(0) ATP synthase produces ATP from ADP in the presence of a proton or sodium gradient. F-type ATPases consist of two structural domains, F(1) containing the extramembraneous catalytic core and F(0) containing the membrane proton channel, linked together by a central stalk and a peripheral stalk. During catalysis, ATP synthesis in the catalytic domain of F(1) is coupled via a rotary mechanism of the central stalk subunits to proton translocation. Key component of the F(0) channel; it plays a direct role in translocation across the membrane. A homomeric c-ring of between 10-14 subunits forms the central stalk rotor element with the F(1) delta and epsilon subunits. The chain is ATP synthase subunit c, chloroplastic from Emiliania huxleyi (Coccolithophore).